The primary structure comprises 271 residues: Plasmanylethanolamine desaturase 1 (271 aa).

Residues 1 to 25 form a disordered region; sequence MAGAEDAPGRQPELDEDETAEGRRW. Helical transmembrane passes span 48–68, 75–95, and 166–186; these read WCSVILCFSLIAHNLVHLLLL, PLVILGVVAGALVADFLSGLV, and LYPWECFVFCLTIFGTFTNQI. Positions 187–191 match the Histidine box-1 motif; it reads HKWSH. Residues 214–218 carry the Histidine box-2 motif; it reads HHRIH.

The protein belongs to the fatty acid desaturase CarF family.

It is found in the endoplasmic reticulum membrane. It catalyses the reaction a 1-(1,2-saturated alkyl)-2-acyl-sn-glycero-3-phosphoethanolamine + 2 Fe(II)-[cytochrome b5] + O2 + 2 H(+) = a 1-O-(1Z-alkenyl)-2-acyl-sn-glycero-3-phosphoethanolamine + 2 Fe(III)-[cytochrome b5] + 2 H2O. The catalysed reaction is a 1-O-hexadecyl-2-acyl-sn-glycero-3-phosphoethanolamine + 2 Fe(II)-[cytochrome b5] + O2 + 2 H(+) = a 1-O-(1Z-hexadecenyl)-2-acyl-sn-glycero-3-phosphoethanolamine + 2 Fe(III)-[cytochrome b5] + 2 H2O. The enzyme catalyses a 1-O-octadecyl-2-acyl-sn-glycero-3-phosphoethanolamine + 2 Fe(II)-[cytochrome b5] + O2 + 2 H(+) = a 1-O-(1Z-octadecenyl)-2-acyl-sn-glycero-3-phosphoethanolamine + 2 Fe(III)-[cytochrome b5] + 2 H2O. It carries out the reaction a 1-O-(9Z-octadecenyl)-2-acyl-sn-glycero-3-phosphoethanolamine + 2 Fe(II)-[cytochrome b5] + O2 + 2 H(+) = a 1-O-(1Z,9Z-octadecadienyl)-2-acyl-sn-glycero-3-phosphoethanolamine + 2 Fe(III)-[cytochrome b5] + 2 H2O. It functions in the pathway lipid metabolism; fatty acid metabolism. Plasmanylethanolamine desaturase involved in plasmalogen biogenesis in the endoplasmic reticulum membrane. Plasmalogens are glycerophospholipids with a hydrocarbon chain linked by a vinyl ether bond at the glycerol sn-1 position, and are involved in antioxidative and signaling mechanisms. The polypeptide is Plasmanylethanolamine desaturase 1 (Mus musculus (Mouse)).